A 559-amino-acid chain; its full sequence is Potassium-transporting ATPase potassium-binding subunit (559 aa).

13 helical membrane-spanning segments follow: residues 5–25, 27–47, 63–83, 132–152, 170–190, 253–273, 283–303, 327–347, 356–376, 379–399, 416–436, 484–504, and 524–544; these read GFLLIASFLLILLVLAKPLGS, LARLIAAVPLPGVAGIERILW, LLALLTLNLLGLGILFCLLFW, GLTVQNFLSAATGIAVVFALI, LVRITLWILFPVALIIALFFI, LAQMLAIFLIPAALCFAFGEA, LLWAMSFIFVVCVAVVMWAEV, FGVLASSLFAVVTTAASCGAV, ALGGMVPMWLMQIGEVVFGGV, GLYGMLLFVLLAVFIAGLMIG, MTALAILVTPMLVLLGSALAM, LLAFCMFVGRFGVIIPVMAIA, and GALFIGLLIGTVLLVGALTFI.

It belongs to the KdpA family. The system is composed of three essential subunits: KdpA, KdpB and KdpC.

Its subcellular location is the cell inner membrane. In terms of biological role, part of the high-affinity ATP-driven potassium transport (or Kdp) system, which catalyzes the hydrolysis of ATP coupled with the electrogenic transport of potassium into the cytoplasm. This subunit binds the periplasmic potassium ions and delivers the ions to the membrane domain of KdpB through an intramembrane tunnel. In Salmonella heidelberg (strain SL476), this protein is Potassium-transporting ATPase potassium-binding subunit.